Consider the following 247-residue polypeptide: uncharacterized protein (247 aa).

The region spanning 11–85 is the HTH merR-type domain; that stretch reads GMSIGAVLDL…LKVIRAQLDA (75 aa). Positions 14 to 38 form a DNA-binding region, H-T-H motif; the sequence is IGAVLDLLRPDFPDVTISKIRFLEA.

Homodimer.

Its function is as follows. Transcriptional regulator that binds to its own promoter and thus may play a role in the regulation of the cotranscribed genes Rv1827 and Rv1828. Can also bind several promoter regions of genes that are essential, including ftsZ. Binds to the imperfect everted repeat sequence CTCAA through its winged-HTH motif. This is an uncharacterized protein from Mycobacterium tuberculosis (strain ATCC 25618 / H37Rv).